The sequence spans 122 residues: Large ribosomal subunit protein uL14 (122 aa).

Belongs to the universal ribosomal protein uL14 family. In terms of assembly, part of the 50S ribosomal subunit. Forms a cluster with proteins L3 and L19. In the 70S ribosome, L14 and L19 interact and together make contacts with the 16S rRNA in bridges B5 and B8.

In terms of biological role, binds to 23S rRNA. Forms part of two intersubunit bridges in the 70S ribosome. This is Large ribosomal subunit protein uL14 from Chlorobium limicola (strain DSM 245 / NBRC 103803 / 6330).